The chain runs to 716 residues: MKDHDFDGDKGLAKGFLENFADANGRSKYMEILQEVSNRKIRAIQVDLDDLFNYKDESEEFLGRLTENTRRYVSIFSAAVDELLPEPTEAFPDDDHDILMTQRADDGTDNPDVSDPHQQIPSEIKRYYEVYFKAPSKGRPSTIREVKASHIGQLVRISGIVTRCSDVKPLMAVAVYTCEDCGHEIYQEVTSRVFMPLFKCPSSRCRLNSKAGNPILQLRASKFLKFQEAKMQELAEHVPKGHIPRSMTVHLRGELTRKVSPGDVVEFSGIFLPIPYTGFKALRAGLVADTYLEATSVTHFKKKYEEYEFQKDEEEQIARLAEDGDIYNKLSRSLAPEIYGHEDIKKALLLLLVGAPHRQLKDGMKIRGDVHICLMGDPGVAKSQLLKHIINVAPRGVYTTGKGSSGVGLTAAVMRDQVTNEMVLEGGALVLADMGICAIDEFDKMDESDRTAIHEVMEQQTVSIAKAGITTSLNARTAVLAAANPAWGRYDLRRTPAENINLPPALLSRFDLLWLILDRADMDSDLELAKHVLHVHQTEESPALGFEPLEPNILRAYISAARRLSPYVPAELEEYIATAYSSIRQEEAKSNTPHSYTTVRTLLSILRISAALARLRFSESVAQSDVDEALRLMQMSKISLYADDRQKAGLDAISDTYSIIRDEAARSKKTHVSYANALNWISRKGYSEAQLKECLEEYAALNVWQIDPHTFDIRFI.

Residues 178 to 205 (CEDCGHEIYQEVTSRVFMPLFKCPSSRC) form a C4-type zinc finger. In terms of domain architecture, MCM spans 326-531 (IYNKLSRSLA…MDSDLELAKH (206 aa)). Residue 376-383 (GDPGVAKS) coordinates ATP. Positions 508–511 (SRFD) match the Arginine finger motif.

Belongs to the MCM family. As to quaternary structure, component of the minichromosome maintenance (MCM) complex, a heterotetramer composed of MCM2, MCM3, MCM4, MCM5, MCM6 and MCM7. Interacts with ETG1. Expressed in shoot apex and flower buds.

It is found in the nucleus. The protein resides in the cytoplasm. The catalysed reaction is ATP + H2O = ADP + phosphate + H(+). Probable component of the MCM2-7 complex (MCM complex) that may function as a DNA helicase and which is essential to undergo a single round of replication initiation and elongation per cell cycle in eukaryotic cells. Required for megagametophyte and embryo development. The sequence is that of DNA replication licensing factor MCM7 (MCM7) from Arabidopsis thaliana (Mouse-ear cress).